The following is a 197-amino-acid chain: Carbohydrate-binding X8 domain-containing protein (197 aa).

A signal peptide spans 1 to 19 (MAVLLPLFLLSFMFTYSNA). Over residues 101–113 (SCLSSSSSNGTPT) the composition is skewed to low complexity. Residues 101–176 (SCLSSSSSNG…TSGDPNGGEE (76 aa)) form a disordered region. The span at 116–125 (YPSTGNSTTA) shows a compositional bias: polar residues. The span at 126-145 (SPGTTNPSTGNSTNSTLPTN) shows a compositional bias: low complexity. Residues 146–155 (DKPTSSTITF) are compositionally biased toward polar residues. A compositionally biased stretch (low complexity) spans 156 to 170 (PDSTTMGPSSSTSGD). Asparagine 172 carries GPI-anchor amidated asparagine lipidation. Residues 173–197 (GGEELSVRTTTIILLTTIAAVALRV) constitute a propeptide, removed in mature form.

In terms of tissue distribution, expressed in the sieve elements.

The protein localises to the cell membrane. This is Carbohydrate-binding X8 domain-containing protein from Arabidopsis thaliana (Mouse-ear cress).